Reading from the N-terminus, the 515-residue chain is Sterol 14-alpha demethylase cyp51A (515 aa).

Residues 7–29 (LTAYMAVAVLTAILLNVVYQLFF) traverse the membrane as a helical segment. 2 N-linked (GlcNAc...) asparagine glycosylation sites follow: Asn33 and Asn269. Cys454 contributes to the heme binding site. Asn512 is a glycosylation site (N-linked (GlcNAc...) asparagine).

The protein belongs to the cytochrome P450 family. Heme serves as cofactor.

The protein resides in the endoplasmic reticulum membrane. It carries out the reaction a 14alpha-methyl steroid + 3 reduced [NADPH--hemoprotein reductase] + 3 O2 = a Delta(14) steroid + formate + 3 oxidized [NADPH--hemoprotein reductase] + 4 H2O + 4 H(+). It catalyses the reaction a 14alpha-methyl steroid + reduced [NADPH--hemoprotein reductase] + O2 = a 14alpha-hydroxymethyl steroid + oxidized [NADPH--hemoprotein reductase] + H2O + H(+). The catalysed reaction is a 14alpha-hydroxymethyl steroid + reduced [NADPH--hemoprotein reductase] + O2 = a 14alpha-formyl steroid + oxidized [NADPH--hemoprotein reductase] + 2 H2O + H(+). The enzyme catalyses a 14alpha-formyl steroid + reduced [NADPH--hemoprotein reductase] + O2 = a Delta(14) steroid + formate + oxidized [NADPH--hemoprotein reductase] + H2O + 2 H(+). It carries out the reaction lanosterol + 3 reduced [NADPH--hemoprotein reductase] + 3 O2 = 4,4-dimethyl-5alpha-cholesta-8,14,24-trien-3beta-ol + formate + 3 oxidized [NADPH--hemoprotein reductase] + 4 H2O + 4 H(+). It catalyses the reaction lanosterol + reduced [NADPH--hemoprotein reductase] + O2 = 32-hydroxylanosterol + oxidized [NADPH--hemoprotein reductase] + H2O + H(+). The catalysed reaction is 32-hydroxylanosterol + reduced [NADPH--hemoprotein reductase] + O2 = 32-oxolanosterol + oxidized [NADPH--hemoprotein reductase] + 2 H2O + H(+). The enzyme catalyses 32-oxolanosterol + reduced [NADPH--hemoprotein reductase] + O2 = 4,4-dimethyl-5alpha-cholesta-8,14,24-trien-3beta-ol + formate + oxidized [NADPH--hemoprotein reductase] + H2O + 2 H(+). It carries out the reaction eburicol + 3 reduced [NADPH--hemoprotein reductase] + 3 O2 = 14-demethyleburicol + formate + 3 oxidized [NADPH--hemoprotein reductase] + 4 H2O + 4 H(+). It catalyses the reaction eburicol + reduced [NADPH--hemoprotein reductase] + O2 = 32-hydroxyeburicol + oxidized [NADPH--hemoprotein reductase] + H2O + H(+). The catalysed reaction is 32-hydroxyeburicol + reduced [NADPH--hemoprotein reductase] + O2 = 32-oxoeburicol + oxidized [NADPH--hemoprotein reductase] + 2 H2O + H(+). The enzyme catalyses 32-oxoeburicol + reduced [NADPH--hemoprotein reductase] + O2 = 14-demethyleburicol + formate + oxidized [NADPH--hemoprotein reductase] + H2O + 2 H(+). Its pathway is steroid metabolism; ergosterol biosynthesis. The sterol 14-alpha demethylase activity is inhibited by azole compounds. Activity is inhibited by the novel and long-acting fungicidal azole, PC1244. Its function is as follows. Sterol 14alpha-demethylase, encoded by cyp51A and cyp51B, that plays a critical role in the third module of ergosterol biosynthesis pathway, being ergosterol the major sterol component in fungal membranes that participates in a variety of functions. The third module or late pathway involves the ergosterol synthesis itself through consecutive reactions that mainly occur in the endoplasmic reticulum (ER) membrane. In filamentous fungi, during the initial step of this module, lanosterol (lanosta-8,24-dien-3beta-ol) can be metabolized to eburicol. Sterol 14alpha-demethylase catalyzes the three-step oxidative removal of the 14alpha-methyl group (C-32) of both these sterols in the form of formate, and converts eburicol and lanosterol to 14-demethyleburicol (4,4,24-trimethylergosta-8,14,24(28)-trienol) and 4,4-dimethyl-5alpha-cholesta-8,14,24-trien-3beta-ol, respectively, which are further metabolized by other enzymes in the pathway to ergosterol. Can also use substrates not intrinsic to fungi, such as 24,25-dihydrolanosterol (DHL), producing 4,4'-dimethyl-8,14-cholestadien-3-beta-ol, but at lower rates than the endogenous substrates. Functionally, as a target of azole drugs, plays a crucial role in azole susceptibility. In Aspergillus fumigatus (strain ATCC MYA-4609 / CBS 101355 / FGSC A1100 / Af293) (Neosartorya fumigata), this protein is Sterol 14-alpha demethylase cyp51A.